Consider the following 229-residue polypeptide: Potassium/proton antiporter CemA (229 aa).

The next 2 helical transmembrane spans lie at 7 to 27 (FTPL…SFSV) and 107 to 127 (ILHF…SILG).

Belongs to the CemA family.

Its subcellular location is the plastid. The protein resides in the chloroplast inner membrane. It carries out the reaction K(+)(in) + H(+)(out) = K(+)(out) + H(+)(in). Functionally, contributes to K(+)/H(+) antiport activity by supporting proton efflux to control proton extrusion and homeostasis in chloroplasts in a light-dependent manner to modulate photosynthesis. Prevents excessive induction of non-photochemical quenching (NPQ) under continuous-light conditions. Indirectly promotes efficient inorganic carbon uptake into chloroplasts. This is Potassium/proton antiporter CemA from Solanum tuberosum (Potato).